We begin with the raw amino-acid sequence, 149 residues long: Small ribosomal subunit protein uS17c (149 aa).

The N-terminal 49 residues, 1 to 49 (MITSSLTSSLQALKLSSPFAHGSTPLSSLSKPNSFPNHRMPALVPVIRA), are a transit peptide targeting the chloroplast.

It belongs to the universal ribosomal protein uS17 family. Part of the 30S ribosomal subunit.

The protein localises to the plastid. The protein resides in the chloroplast. In terms of biological role, one of the primary rRNA binding proteins, it binds specifically to the 5'-end of 16S ribosomal RNA. Required for optimal plastid performance in terms of photosynthesis and growth. Required for the translation of plastid mRNAs. Plays a critical role in biosynthesis of thylakoid membrane proteins encoded by chloroplast genes. This chain is Small ribosomal subunit protein uS17c (RPS17), found in Arabidopsis thaliana (Mouse-ear cress).